Reading from the N-terminus, the 119-residue chain is Nascent polypeptide-associated complex protein (119 aa).

Residues 5–73 (RMNSREMRRL…MREVPKEPEE (69 aa)) form the NAC-A/B domain.

This sequence belongs to the NAC-alpha family. In terms of assembly, homodimer. Interacts with the ribosome. Binds ribosomal RNA.

Its function is as follows. Contacts the emerging nascent chain on the ribosome. The protein is Nascent polypeptide-associated complex protein of Thermoplasma acidophilum (strain ATCC 25905 / DSM 1728 / JCM 9062 / NBRC 15155 / AMRC-C165).